We begin with the raw amino-acid sequence, 182 residues long: Bifunctional protein PyrR (182 aa).

A PRPP-binding motif is present at residues 99–111 (VILVDDVLYTGRT).

The protein belongs to the purine/pyrimidine phosphoribosyltransferase family. PyrR subfamily. In terms of assembly, homodimer and homohexamer; in equilibrium.

The catalysed reaction is UMP + diphosphate = 5-phospho-alpha-D-ribose 1-diphosphate + uracil. Functionally, regulates transcriptional attenuation of the pyrimidine nucleotide (pyr) operon by binding in a uridine-dependent manner to specific sites on pyr mRNA. This disrupts an antiterminator hairpin in the RNA and favors formation of a downstream transcription terminator, leading to a reduced expression of downstream genes. Also displays a weak uracil phosphoribosyltransferase activity which is not physiologically significant. The polypeptide is Bifunctional protein PyrR (Alkaliphilus metalliredigens (strain QYMF)).